A 465-amino-acid polypeptide reads, in one-letter code: Siroheme synthase (465 aa).

A precorrin-2 dehydrogenase /sirohydrochlorin ferrochelatase region spans residues 1–203 (MDFLPLFHSL…GRPAEAERLL (203 aa)). NAD(+)-binding positions include 22–23 (EV) and 43–44 (PQ). A Phosphoserine modification is found at Ser128. The interval 217–465 (GEVYLVGAGP…AWFEGAREGA (249 aa)) is uroporphyrinogen-III C-methyltransferase. An S-adenosyl-L-methionine-binding site is contributed by Pro226. The active-site Proton acceptor is the Asp249. Catalysis depends on Lys271, which acts as the Proton donor. Residues 302–304 (GGD), Ile307, 332–333 (TA), Met384, and Gly413 contribute to the S-adenosyl-L-methionine site.

This sequence in the N-terminal section; belongs to the precorrin-2 dehydrogenase / sirohydrochlorin ferrochelatase family. In the C-terminal section; belongs to the precorrin methyltransferase family.

The catalysed reaction is uroporphyrinogen III + 2 S-adenosyl-L-methionine = precorrin-2 + 2 S-adenosyl-L-homocysteine + H(+). It carries out the reaction precorrin-2 + NAD(+) = sirohydrochlorin + NADH + 2 H(+). It catalyses the reaction siroheme + 2 H(+) = sirohydrochlorin + Fe(2+). It participates in cofactor biosynthesis; adenosylcobalamin biosynthesis; precorrin-2 from uroporphyrinogen III: step 1/1. The protein operates within cofactor biosynthesis; adenosylcobalamin biosynthesis; sirohydrochlorin from precorrin-2: step 1/1. It functions in the pathway porphyrin-containing compound metabolism; siroheme biosynthesis; precorrin-2 from uroporphyrinogen III: step 1/1. Its pathway is porphyrin-containing compound metabolism; siroheme biosynthesis; siroheme from sirohydrochlorin: step 1/1. It participates in porphyrin-containing compound metabolism; siroheme biosynthesis; sirohydrochlorin from precorrin-2: step 1/1. Functionally, multifunctional enzyme that catalyzes the SAM-dependent methylations of uroporphyrinogen III at position C-2 and C-7 to form precorrin-2 via precorrin-1. Then it catalyzes the NAD-dependent ring dehydrogenation of precorrin-2 to yield sirohydrochlorin. Finally, it catalyzes the ferrochelation of sirohydrochlorin to yield siroheme. The chain is Siroheme synthase from Pseudomonas paraeruginosa (strain DSM 24068 / PA7) (Pseudomonas aeruginosa (strain PA7)).